Reading from the N-terminus, the 498-residue chain is ATP synthase subunit beta, chloroplastic (498 aa).

172-179 (GGAGVGKT) contacts ATP.

It belongs to the ATPase alpha/beta chains family. In terms of assembly, F-type ATPases have 2 components, CF(1) - the catalytic core - and CF(0) - the membrane proton channel. CF(1) has five subunits: alpha(3), beta(3), gamma(1), delta(1), epsilon(1). CF(0) has four main subunits: a(1), b(1), b'(1) and c(9-12).

It localises to the plastid. The protein resides in the chloroplast thylakoid membrane. It catalyses the reaction ATP + H2O + 4 H(+)(in) = ADP + phosphate + 5 H(+)(out). Its function is as follows. Produces ATP from ADP in the presence of a proton gradient across the membrane. The catalytic sites are hosted primarily by the beta subunits. The sequence is that of ATP synthase subunit beta, chloroplastic from Myristica fragrans (Nutmeg).